Consider the following 27-residue polypeptide: uncharacterized protein (27 aa).

Its subcellular location is the plastid. It localises to the chloroplast. This is an uncharacterized protein from Trieres chinensis (Marine centric diatom).